The sequence spans 225 residues: MPVTPQQPSGHTEGLPEPTAEAAVWVVIPCGPCIPIMLGLASLTAFFIITTAVLAERLFRRPQPDPSQRAPTLVWRPGGELWIEPTSSARERSEDWYGSSMPLLMDRAPGPPTPGGTLEGRATAPPATSAPYSSLSSLVPQTPPEVPAQSTFWRPQTQEERPHDTSLVSWVGSEPMPEAGLQVGSPRPWRPRQGSLEPDWGLQPRVTLEQISAFWKREGRTSVGF.

The chain crosses the membrane as a helical span at residues 32–52; that stretch reads PCIPIMLGLASLTAFFIITTA. 2 disordered regions span residues 106 to 163 and 178 to 200; these read DRAP…ERPH and EAGLQVGSPRPWRPRQGSLEPDW. A phosphothreonine mark is found at threonine 113 and threonine 117. Positions 122 to 140 are enriched in low complexity; it reads ATAPPATSAPYSSLSSLVP. A Phosphoserine modification is found at serine 195.

The protein resides in the membrane. The sequence is that of Transmembrane protein C16orf54 homolog from Mus musculus (Mouse).